Reading from the N-terminus, the 1287-residue chain is FYVE zinc finger domain protein UPA1 (1287 aa).

The interval 1-298 (MTIPDPANII…SSTSLSAPAE (298 aa)) is disordered. Residues 86 to 99 (DSSSFGSKPSSSAS) are compositionally biased toward low complexity. Positions 115–136 (WATSSTTSHPSKASQSTLSPNA) are enriched in polar residues. Positions 128–144 (SQSTLSPNASVFKPSRS) match the PAM2 motif. 2 stretches are compositionally biased toward basic and acidic residues: residues 177–187 (RPDHAPLDHEQ) and 201–211 (KVEEQRGDHSI). The segment covering 212-235 (PHQNGLVSAQAQTASDAVSTSKYT) has biased composition (polar residues). Residues 239 to 253 (ADQEEDQDDFVYPGA) carry the PAM2L 1 motif. Over residues 255 to 294 (SPSSGQAAVQDEQQAVTDSQTTKSLTKQESDPEASSTSLS) the composition is skewed to polar residues. ANK repeat units follow at residues 366 to 395 (NGLV…AIVE), 400 to 429 (EGET…DANA), 433 to 463 (DGWT…QIDV), and 468 to 497 (GAWT…ADPF). 4 disordered regions span residues 582–630 (NGGK…VGLP), 643–697 (RVGP…ASAQ), 934–960 (REAA…YPNS), and 977–1005 (TSGT…APSE). Residues 674–695 (STPTPESVLQARRGTSSVNGAS) show a composition bias toward polar residues. Over residues 938–955 (GLDEDEDEDAADDDDDEF) the composition is skewed to acidic residues. The PAM2L 2 signature appears at 941-960 (EDEDEDAADDDDDEFIYPNS). Positions 981–995 (LSRPSLSQRQSSAAS) are enriched in low complexity. The FYVE-type zinc finger occupies 1055 to 1129 (DEEAKDCIGC…VCNGCHAELQ (75 aa)). Zn(2+)-binding residues include C1061, C1064, C1077, C1080, C1085, C1088, C1121, and C1124. An RING-type; atypical zinc finger spans residues 1243–1283 (CSICMEDFVANSTIARLPCLCYFHRGCIDSWFKRGRECPVH).

Belongs to the UPA1 PAM2 domain-binding protein family. In terms of assembly, part of large ribonucleoprotein complexes (mRNPs) containing RNA-binding proteins RRM4 and PAB1, endosome-binding protein UPA1, core scaffold protein UPA2 and associated factor GRP1. Interacts (via PAM2 motif) with PAB1 (via PABC domain). Interacts (via PAM2L motifs) with RRM4.

The protein resides in the cytoplasm. Its subcellular location is the cytoskeleton. It is found in the endosome. In terms of biological role, FYVE zinc finger domain protein that functions in endosomal targeting and transport of mRNAs, as well as associated ribosomes. The endosomal mRNA transport regulates polarity of the infectious hyphae by transporting a broad spectrum of cargo mRNAs from the nucleus to cell poles. Involved in chitinase CTS1 secretion. Dispensable for general endosomal functions but crucial for endosomal recruitment of RRM4. The polypeptide is FYVE zinc finger domain protein UPA1 (Mycosarcoma maydis (Corn smut fungus)).